Consider the following 523-residue polypeptide: MAGQRVLLLVGFLLPGVLLSEAAKILTISTVGGSHYLLMDRVSQILQDHGHNVTMLNHKRGPFMPDFKKEEKSYQVISWLAPEDHQREFKKSFDFFLEETLGGRGKFENLLNVLEYLALQCSHFLNRKDIMDSLKNENFDMVIVETFDYCPFLIAEKLGKPFVAILSTSFGSLEFGLPIPLSYVPVFRSLLTDHMDFWGRVKNFLMFFSFCRRQQHMQSTFDNTIKEHFTEGSRPVLSHLLLKAELWFINSDFAFDFARPLLPNTVYVGGLMEKPIKPVPQDLENFIAKFGDSGFVLVTLGSMVNTCQNPEIFKEMNNAFAHLPQGVIWKCQCSHWPKDVHLAANVKIVDWLPQSDLLAHPSIRLFVTHGGQNSIMEAIQHGVPMVGIPLFGDQPENMVRVEAKKFGVSIQLKKLKAETLALKMKQIMEDKRYKSAAVAASVILRSHPLSPTQRLVGWIDHVLQTGGATHLKPYVFQQPWHEQYLLDVFVFLLGLTLGTLWLCGKLLGMAVWWLRGARKVKET.

A signal peptide spans 1–22 (MAGQRVLLLVGFLLPGVLLSEA). Topologically, residues 23–483 (AKILTISTVG…YVFQQPWHEQ (461 aa)) are extracellular. An N-linked (GlcNAc...) asparagine glycan is attached at Asn52. Residues 484–504 (YLLDVFVFLLGLTLGTLWLCG) form a helical membrane-spanning segment. The Cytoplasmic portion of the chain corresponds to 505 to 523 (KLLGMAVWWLRGARKVKET).

Belongs to the UDP-glycosyltransferase family.

The protein localises to the membrane. It catalyses the reaction glucuronate acceptor + UDP-alpha-D-glucuronate = acceptor beta-D-glucuronoside + UDP + H(+). Its function is as follows. UDP-glucuronosyltransferases catalyze phase II biotransformation reactions in which lipophilic substrates are conjugated with glucuronic acid to increase water solubility and enhance excretion. They are of major importance in the conjugation and subsequent elimination of potentially toxic xenobiotics and endogenous compounds. The protein is UDP-glucuronosyltransferase 3A2 (UGT3A2) of Homo sapiens (Human).